Reading from the N-terminus, the 342-residue chain is Probable receptor-like protein kinase At4g10390 (342 aa).

Residues 41-336 (SNFSRLIGSG…IKEIPSLSFL (296 aa)) enclose the Protein kinase domain. ATP contacts are provided by residues 47–55 (IGSGGYSSI) and Lys-69. Asp-165 acts as the Proton acceptor in catalysis. A phosphoserine mark is found at Ser-169 and Ser-201. Tyr-220 carries the phosphotyrosine modification.

Belongs to the protein kinase superfamily. Ser/Thr protein kinase family.

The catalysed reaction is L-seryl-[protein] + ATP = O-phospho-L-seryl-[protein] + ADP + H(+). It catalyses the reaction L-threonyl-[protein] + ATP = O-phospho-L-threonyl-[protein] + ADP + H(+). This is Probable receptor-like protein kinase At4g10390 from Arabidopsis thaliana (Mouse-ear cress).